The primary structure comprises 509 residues: MNYLVGLVLIFTIFYFFLQKNDKNMNSKIPGPKGIPILGNLLSMKGDLHLKLQEWYKQYGVIYRIKMGNVETVVLTEYPIIREAFIGNSNSFVNRFQRKSRLKLNNGENLVIVNGDIHNKLKTLVLSEMTNQRIKKYETSFIDNEIKKLFKVLDEHADTGKPIILNNHIKMFSMNIVLCFTFGLNYSYPYDEFEKASEFIKLMVEFFNIAGQPIISDFIPSLEPFIDTSNYLNTYKRIFNYTSDLITKFKNENEIHNNINDNNKSLADKPILSKLLQSFENGEISWDSVVSTCIDLQTAGADTSANTILYCLLELINNPNIQSKVYDDIKQAIIQSKENENQNDNENQEQTEEIITLSFNKYRTLAPYLSMVVKETFRKYPSGTIGLPHVTSEDVELNGYKICAGTQIIQNIWATHRNEKQFSEPDSFIPERFISQQQSANSNLIHFGCGVRDCIGKSLADSEIFTMLASLINRYEFTNPNPSTPLNEIGKFGITYSCPENKIIIKKRF.

The chain crosses the membrane as a helical span at residues N2–Q19. C454 is a binding site for heme.

This sequence belongs to the cytochrome P450 family. Requires heme as cofactor.

It localises to the membrane. This chain is Probable cytochrome P450 513A1 (cyp513A1), found in Dictyostelium discoideum (Social amoeba).